The sequence spans 318 residues: Aspartate carbamoyltransferase catalytic subunit (318 aa).

R56 and T57 together coordinate carbamoyl phosphate. K84 provides a ligand contact to L-aspartate. Residues R106, H143, and Q146 each coordinate carbamoyl phosphate. L-aspartate-binding residues include R176 and R230. Carbamoyl phosphate contacts are provided by G271 and P272.

It belongs to the aspartate/ornithine carbamoyltransferase superfamily. ATCase family. In terms of assembly, heterododecamer (2C3:3R2) of six catalytic PyrB chains organized as two trimers (C3), and six regulatory PyrI chains organized as three dimers (R2).

It catalyses the reaction carbamoyl phosphate + L-aspartate = N-carbamoyl-L-aspartate + phosphate + H(+). The protein operates within pyrimidine metabolism; UMP biosynthesis via de novo pathway; (S)-dihydroorotate from bicarbonate: step 2/3. In terms of biological role, catalyzes the condensation of carbamoyl phosphate and aspartate to form carbamoyl aspartate and inorganic phosphate, the committed step in the de novo pyrimidine nucleotide biosynthesis pathway. This is Aspartate carbamoyltransferase catalytic subunit from Mycobacterium avium (strain 104).